Consider the following 551-residue polypeptide: Gliomedin (551 aa).

The Cytoplasmic portion of the chain corresponds to 1–17 (MARGAEGGRGDAGWGLR). Residues 18 to 39 (GALAAVALLSALNAAGTVFALC) traverse the membrane as a helical; Signal-anchor for type II membrane protein segment. The Extracellular portion of the chain corresponds to 40–551 (QWRGLSSALR…VQFLSTTLNQ (512 aa)). Residues 72–107 (LSRAPRGASAPPQDPASSARNKRSHSGEPAPHIRAE) are disordered. Over residues 79-90 (ASAPPQDPASSA) the composition is skewed to low complexity. The N-linked (GlcNAc...) asparagine glycan is linked to Asn130. Collagen-like domains are found at residues 137-195 (LTGP…RGEK) and 196-222 (GDHGELGLQGNEGPPGQKGEKGDKGDV). The tract at residues 139–282 (GPSGPPGPPG…GETCAIPNDD (144 aa)) is disordered. 2 stretches are compositionally biased toward basic and acidic residues: residues 191 to 200 (ERGEKGDHGE) and 213 to 222 (KGEKGDKGDV). Pro residues predominate over residues 237 to 253 (PPGPPGPPGPPGPPGPP). In terms of domain architecture, Olfactomedin-like spans 299–546 (QAESMITSIG…LMLYPVQFLS (248 aa)). Residues Asn329, Asn357, Asn378, and Asn464 are each glycosylated (N-linked (GlcNAc...) asparagine).

As to quaternary structure, homotrimer (via collagen-like domains). Interacts with NRCAM and NFASC/neurofascin. Interaction with glial NRCAM enhances interaction with axonal NFASC. Interacts with MYOC. Post-translationally, N-glycosylated. In terms of processing, proteolytic processing by a furin-like protease causes shedding of the ectodomain. Further cleavage by BMP1 releases the olfactomedin-like domain. As to expression, specifically expressed in spinal cord, brain, placenta and sciatic nerve. More abundant in peripheral than central nervous system.

The protein resides in the cell membrane. It is found in the cell projection. The protein localises to the axon. Its subcellular location is the secreted. It localises to the extracellular space. The protein resides in the extracellular matrix. Ligand for NRCAM and NFASC/neurofascin that plays a role in the formation and maintenance of the nodes of Ranvier on myelinated axons. Mediates interaction between Schwann cell microvilli and axons via its interactions with NRCAM and NFASC. Nodes of Ranvier contain clustered sodium channels that are crucial for the saltatory propagation of action potentials along myelinated axons. During development, nodes of Ranvier are formed by the fusion of two heminodes. Required for normal clustering of sodium channels at heminodes; not required for the formation of mature nodes with normal sodium channel clusters. Required, together with NRCAM, for maintaining NFASC and sodium channel clusters at mature nodes of Ranvier. The chain is Gliomedin (GLDN) from Homo sapiens (Human).